The sequence spans 290 residues: Serine protease 27 (290 aa).

A signal peptide spans 1 to 22; the sequence is MRRPAAVPLLLLLCFGSQRAKA. Residues 23–34 constitute a propeptide, activation peptide; it reads ATACGRPRMLNR. Positions 35 to 277 constitute a Peptidase S1 domain; it reads MVGGQDTQEG…HHNWIHRIIP (243 aa). Residue N55 is glycosylated (N-linked (GlcNAc...) asparagine). C60 and C76 are oxidised to a cystine. H75 functions as the Charge relay system in the catalytic mechanism. A glycan (N-linked (GlcNAc...) asparagine) is linked at N79. Catalysis depends on D124, which acts as the Charge relay system. Cystine bridges form between C158/C235, C191/C214, and C225/C253. The Charge relay system role is filled by S229.

It belongs to the peptidase S1 family. Post-translationally, N-glycosylated. In terms of tissue distribution, expressed predominantly in the pancreas.

Its subcellular location is the secreted. The protein is Serine protease 27 (PRSS27) of Homo sapiens (Human).